A 456-amino-acid chain; its full sequence is Cobyrinate a,c-diamide synthase (456 aa).

In terms of domain architecture, GATase cobBQ-type spans Pro-247–Trp-439. The active-site Nucleophile is Cys-330.

It belongs to the CobB/CbiA family. Mg(2+) is required as a cofactor.

The enzyme catalyses cob(II)yrinate + 2 L-glutamine + 2 ATP + 2 H2O = cob(II)yrinate a,c diamide + 2 L-glutamate + 2 ADP + 2 phosphate + 2 H(+). It functions in the pathway cofactor biosynthesis; adenosylcobalamin biosynthesis; cob(II)yrinate a,c-diamide from sirohydrochlorin (anaerobic route): step 10/10. Functionally, catalyzes the ATP-dependent amidation of the two carboxylate groups at positions a and c of cobyrinate, using either L-glutamine or ammonia as the nitrogen source. This Synechococcus sp. (strain ATCC 27144 / PCC 6301 / SAUG 1402/1) (Anacystis nidulans) protein is Cobyrinate a,c-diamide synthase.